The sequence spans 459 residues: Mitochondrial distribution and morphology protein 34 (459 aa).

The SMP-LTD domain maps to 1–190; it reads MSFRFNEAVF…LPSLIFNTSQ (190 aa). The segment covering 338–347 has biased composition (basic and acidic residues); sequence RSNSNDDNAK. The segment at 338–375 is disordered; sequence RSNSNDDNAKPRRRKIKCKKTRTPSNLQSQGEQAVDDS. The span at 348–359 shows a compositional bias: basic residues; it reads PRRRKIKCKKTR.

Belongs to the MDM34 family. In terms of assembly, component of the ER-mitochondria encounter structure (ERMES) or MDM complex, composed of MMM1, MDM10, MDM12 and MDM34. Ubiquitinated by a SCF (SKP1-CUL1-F-box protein) E3 ubiquitin-protein ligase complex containing the F-box protein MDM30. Ubiquitination is important for mitochondrial integrity.

It localises to the mitochondrion outer membrane. Its function is as follows. Component of the ERMES/MDM complex, which serves as a molecular tether to connect the endoplasmic reticulum (ER) and mitochondria. Components of this complex are involved in the control of mitochondrial shape and protein biogenesis, and function in nonvesicular lipid trafficking between the ER and mitochondria. MDM34 is required for the interaction of the ER-resident membrane protein MMM1 and the outer mitochondrial membrane-resident beta-barrel protein MDM10. This Saccharomyces cerevisiae (strain AWRI1631) (Baker's yeast) protein is Mitochondrial distribution and morphology protein 34.